The following is a 109-amino-acid chain: Fluoride-specific ion channel FluC 1 (109 aa).

Transmembrane regions (helical) follow at residues 21–41 (LFIN…GFFI), 52–72 (IILS…YFLY), and 84–104 (IIFC…GFWI).

This sequence belongs to the fluoride channel Fluc/FEX (TC 1.A.43) family.

Its subcellular location is the cell inner membrane. The catalysed reaction is fluoride(in) = fluoride(out). In terms of biological role, fluoride-specific ion channel. Important for reducing fluoride concentration in the cell, thus reducing its toxicity. This Prochlorococcus marinus (strain MIT 9312) protein is Fluoride-specific ion channel FluC 1.